Reading from the N-terminus, the 434-residue chain is Zinc finger CCCH domain-containing protein 10 (434 aa).

A disordered region spans residues 1 to 37 (MPDRDSYANGTGSSGGGPGGGGSEEASGAGVGSGGAS). A compositionally biased stretch (gly residues) spans 12-35 (GSSGGGPGGGGSEEASGAGVGSGG). C3H1-type zinc fingers lie at residues 36 to 63 (ASSDAICRDFLRNVCKRGKRCRYRHPDM), 73 to 99 (KNEFIFCHDFQNKECSRPNCRFIHGSK), and 134 to 161 (KEEVPICRDFLKGDCQRGAKCKFRHLQR). An omega-N-methylarginine mark is found at R185 and R186. A compositionally biased stretch (basic and acidic residues) spans 196 to 207 (PDRGFEDHEPGP). Residues 196 to 217 (PDRGFEDHEPGPKRRRGGCCPP) form a disordered region. Positions 234–280 (GVECRLLEEENAMLRKRVEELKKQVSNLLATNEVLLEQNAQFRNQAK) form a coiled coil. The segment covering 314-330 (TTLSSQALQPRPVSQQE) has biased composition (polar residues). Positions 314–362 (TTLSSQALQPRPVSQQELVAPAGAPAAPPTNAAPPAAPPPPPPHLTPEI) are disordered. Over residues 339-358 (AAPPTNAAPPAAPPPPPPHL) the composition is skewed to pro residues.

The protein localises to the nucleus. In terms of biological role, specific regulator of miRNA biogenesis. Binds, via the C3H1-type zinc finger domains, to the binding motif 5'-GCAGCGC-3' on microRNA pri-MIR143 and negatively regulates the processing to mature microRNA. The sequence is that of Zinc finger CCCH domain-containing protein 10 (ZC3H10) from Homo sapiens (Human).